Consider the following 258-residue polypeptide: C4b-binding protein beta chain (258 aa).

A signal peptide spans 1–15 (MLCLVVCCLIWLISA). One can recognise a Sushi 1; atypical; lacks a Cys domain in the interval 18–75 (GSCSEPPPVNNSVFVGKETEEQILGIYLCIKGYHLVGKKSLVFDPSKEWNSTLPECLL). N-linked (GlcNAc...) asparagine glycosylation is found at N27, N67, N89, N95, and N114. 5 disulfide bridges follow: C46–C73, C78–C118, C104–C131, C136–C176, and C162–C188. 2 Sushi domains span residues 76–133 (GHCP…ICRS) and 134–190 (RDCE…TCES). N-linked (GlcNAc...) asparagine glycosylation occurs at N218.

Disulfide-linked complex of alpha and beta chains.

The protein localises to the secreted. Functionally, controls the classical pathway of complement activation. It binds as a cofactor to C3b/C4b inactivator (C3bINA), which then hydrolyzes the complement fragment C4b. It also accelerates the degradation of the C4bC2a complex (C3 convertase) by dissociating the complement fragment C2a. It also interacts with anticoagulant protein S and with serum amyloid P component. The protein is C4b-binding protein beta chain (C4bpb) of Rattus norvegicus (Rat).